The following is a 183-amino-acid chain: Ras-like protein (183 aa).

10-17 serves as a coordination point for GTP; it reads GAGGVGKS. Residues 32–40 carry the Effector region motif; it reads YDPTIEDSY. GTP-binding positions include 57–61 and 116–119; these read DTAGQ and NKCD.

It belongs to the small GTPase superfamily. Ras family.

It is found in the cell membrane. The catalysed reaction is GTP + H2O = GDP + phosphate + H(+). Alternates between an inactive form bound to GDP and an active form bound to GTP. Activated by a guanine nucleotide-exchange factor (GEF) and inactivated by a GTPase-activating protein (GAP). Its function is as follows. Ras proteins bind GDP/GTP and possess intrinsic GTPase activity. The sequence is that of Ras-like protein from Carassius auratus (Goldfish).